Consider the following 654-residue polypeptide: MICOS complex subunit MIC60-2 (654 aa).

The N-terminal 12 residues, 1-12 (MRGSRNLLTQRL), are a transit peptide targeting the mitochondrion. Over 13–20 (ASSRATGS) the chain is Mitochondrial matrix. A helical membrane pass occupies residues 21-43 (SGGLKFVGATVGAVTAGAAGVAG). At 44-654 (YASYDNEFRK…AALTSIRSTY (611 aa)) the chain is on the mitochondrial intermembrane side. Basic and acidic residues predominate over residues 115-129 (LKETTEPKKIEKKPE). A disordered region spans residues 115-140 (LKETTEPKKIEKKPENPYIGAKTPLN).

It belongs to the MICOS complex subunit Mic60 family. As to quaternary structure, component of the mitochondrial contact site and cristae organizing system (MICOS) complex. Expressed in the gonads and muscle cells.

It is found in the mitochondrion inner membrane. Its subcellular location is the cytoplasm. Functionally, sustains mitochondrial morphology probably through maintaining cristae morphology. May act as a component of the MICOS complex, a large protein complex of the mitochondria. This chain is MICOS complex subunit MIC60-2, found in Caenorhabditis elegans.